We begin with the raw amino-acid sequence, 328 residues long: Neuropeptides B/W receptor type 1 (328 aa).

Residues M1 to A37 are Extracellular-facing. N-linked (GlcNAc...) asparagine glycosylation is found at N3, N13, and N25. A helical membrane pass occupies residues V38 to V61. Residues L62 to T72 are Cytoplasmic-facing. The helical transmembrane segment at N73–F97 threads the bilayer. The Extracellular portion of the chain corresponds to L98 to I112. Residues C109 and C188 are joined by a disulfide bond. A helical transmembrane segment spans residues V113 to A132. Residues D133–A157 are Cytoplasmic-facing. Residues V158 to A177 traverse the membrane as a helical segment. The Extracellular segment spans residues R178–A202. Residues S203–T224 form a helical membrane-spanning segment. The Cytoplasmic segment spans residues T225–R248. The chain crosses the membrane as a helical span at residues V249–V273. Over A274–P283 the chain is Extracellular. Residues L284 to A298 traverse the membrane as a helical segment. Topologically, residues N299–A328 are cytoplasmic.

It belongs to the G-protein coupled receptor 1 family. As to expression, found in cerebellum and frontal cortex. Detected at high levels in hippocampus, amygdala and trachea; at moderate levels in fetal brain, pituitary gland and prostate. Not in caudate, accumbens, kidney or liver. Also detected at high levels in lung carcinoma.

It localises to the cell membrane. Interacts specifically with a number of opioid ligands. Receptor for neuropeptides B and W, which may be involved in neuroendocrine system regulation, food intake and the organization of other signals. Has a higher affinity for neuropeptide B. In Homo sapiens (Human), this protein is Neuropeptides B/W receptor type 1 (NPBWR1).